A 110-amino-acid chain; its full sequence is Large ribosomal subunit protein uL22 (110 aa).

This sequence belongs to the universal ribosomal protein uL22 family. Part of the 50S ribosomal subunit.

In terms of biological role, this protein binds specifically to 23S rRNA; its binding is stimulated by other ribosomal proteins, e.g. L4, L17, and L20. It is important during the early stages of 50S assembly. It makes multiple contacts with different domains of the 23S rRNA in the assembled 50S subunit and ribosome. Functionally, the globular domain of the protein is located near the polypeptide exit tunnel on the outside of the subunit, while an extended beta-hairpin is found that lines the wall of the exit tunnel in the center of the 70S ribosome. The polypeptide is Large ribosomal subunit protein uL22 (Klebsiella pneumoniae (strain 342)).